The primary structure comprises 131 residues: Large ribosomal subunit protein bL17 (131 aa).

It belongs to the bacterial ribosomal protein bL17 family. As to quaternary structure, part of the 50S ribosomal subunit. Contacts protein L32.

The sequence is that of Large ribosomal subunit protein bL17 from Methylobacillus flagellatus (strain ATCC 51484 / DSM 6875 / VKM B-1610 / KT).